A 922-amino-acid chain; its full sequence is MNRFKASKFRHMEARPSRREAWISDIRAGTTATCGNHIKSSCSLIAFNSDRPGVLGIISLEGHEENKRHVTYLGCHSDLVTDLDFSPFDDFLLASGSADRTIKLWRLSSTGEALPSVPGVVLGPEELPVDVLQFHPTADGVLVSTAGRTVKVWDVAKQQHLTELEAHKDLVQSAVWSRDGATVGTACKDKQLRIFDPRARAQASQSTQAHENNRDIRLAWTGIQEYLVSTGFNQMREREAKLWDTRVFSSALASITLDTSPGSLIPLLDPDSGLLVLAGKGENQLYCYEVTPQQPALSPVTQCILENALRGAALVPRQALAVMNCEVLQVLQLSDTAIIPISHRVPRKAVEFHEDLFPDTAGSVPASDAHTWWAGDNQQVQKVSLNPAHRPHPRFTSSLLPTLEPSPNMEQPAELPRADTELSEGFSSPSSLVSPSTPSSLGLSLSSTSGIGTSPSQRSLQSLLGPSSKFRHAEGTILHRDSHITNLKGLNLTTPGESDGFCANRLRVAVPLLSSGGQVAVLELQKPGRLPDTALPTLQNGAAVMDLVWDPFDPHRLAVAGEDARIRLWRVPPGGLKNVLTTPETVLTGHTEKIYSLRFHPLAADVLASSSYDLTIRIWDLQAGTEQLRLQGHQDQIFSLAWSPDGKQLATVCKDGRVRVYDPRSSPLPLQDGPGPEGGRGARIVWVCNGGCLLVSGFDSRSERQLQLYMADALAEGPSALLGLDVAPSTLLPSYDPDTGLVLLTGKGDTRVFLYEVIPEAPFFLECNSFTSPDPHKGFILLPKTECDIQDVEFARCLRLRQTSLEPVAFRLPRVRKEFFQDDVFPDTAVTWASALDAKAWFKGANGQPRLLSLQPPGMTPVSQAPREVPARRTPSSAQYLEEKSDQQKKEELLNAMVAKLGNREDPLPQDSFEGVDEDEWD.

WD repeat units lie at residues 75–115 (CHSD…EALP), 124–163 (PEELPVDVLQFHPTADGVLVSTAGRTVKVWDVAKQQHLTE), 166–205 (AHKDLVQSAVWSRDGATVGTACKDKQLRIFDPRARAQASQ), and 209–253 (AHEN…SALA). Residues 386-462 (NPAHRPHPRF…TSPSQRSLQS (77 aa)) are disordered. The segment covering 423–456 (SEGFSSPSSLVSPSTPSSLGLSLSSTSGIGTSPS) has biased composition (low complexity). Phosphoserine occurs at positions 459 and 462. Lysine 469 is covalently cross-linked (Glycyl lysine isopeptide (Lys-Gly) (interchain with G-Cter in ubiquitin)). WD repeat units follow at residues 539–579 (QNGA…LKNV), 589–629 (GHTE…EQLR), 632–671 (GHQDQIFSLAWSPDGKQLATVCKDGRVRVYDPRSSPLPLQ), and 725–765 (DVAP…PFFL). The disordered stretch occupies residues 854–922 (LQPPGMTPVS…FEGVDEDEWD (69 aa)). Phosphothreonine is present on threonine 874. A compositionally biased stretch (basic and acidic residues) spans 881–893 (LEEKSDQQKKEEL). Serine 912 is modified (phosphoserine).

It belongs to the WD repeat coronin family. Interacts with clathrin adapter AP1 complex. This interaction takes place at Golgi membranes and not AP1-positive endosomal membranes. Interacts (when ubiquitinated at Lys-469) with EPS15. The membrane-associated form is phosphorylated on tyrosine residues. Post-translationally, ubiquitinated via 'Lys-33'-linked ubiquitin chains by the BCR(KLHL20) E3 ubiquitin ligase complex: 'Lys-33'-linked ubiquitination promotes interaction with EPS15 and facilitates actin polymerization at the trans-Golgi network, thereby facilitating post-Golgi trafficking. Deubiquitinated by ZRANB1/TRABID.

The protein localises to the golgi apparatus membrane. The protein resides in the golgi apparatus. It localises to the trans-Golgi network. It is found in the cytoplasmic vesicle. Its subcellular location is the cytoplasm. The protein localises to the cytosol. Its function is as follows. F-actin regulator involved in anterograde Golgi to endosome transport: upon ubiquitination via 'Lys-33'-linked ubiquitin chains by the BCR(KLHL20) E3 ubiquitin ligase complex, interacts with EPS15 and localizes to the trans-Golgi network, where it promotes actin polymerization, thereby facilitating post-Golgi trafficking. May play a role in the maintenance of the Golgi apparatus morphology. The protein is Coronin-7 (Coro7) of Rattus norvegicus (Rat).